A 957-amino-acid polypeptide reads, in one-letter code: Glycine dehydrogenase (decarboxylating) (957 aa).

At Lys708 the chain carries N6-(pyridoxal phosphate)lysine.

It belongs to the GcvP family. As to quaternary structure, the glycine cleavage system is composed of four proteins: P, T, L and H. Requires pyridoxal 5'-phosphate as cofactor.

The catalysed reaction is N(6)-[(R)-lipoyl]-L-lysyl-[glycine-cleavage complex H protein] + glycine + H(+) = N(6)-[(R)-S(8)-aminomethyldihydrolipoyl]-L-lysyl-[glycine-cleavage complex H protein] + CO2. In terms of biological role, the glycine cleavage system catalyzes the degradation of glycine. The P protein binds the alpha-amino group of glycine through its pyridoxal phosphate cofactor; CO(2) is released and the remaining methylamine moiety is then transferred to the lipoamide cofactor of the H protein. The polypeptide is Glycine dehydrogenase (decarboxylating) (Shigella dysenteriae serotype 1 (strain Sd197)).